The following is a 147-amino-acid chain: Hemoglobin subunit delta (147 aa).

The region spanning 3–147 (HLTGEEKAAV…VANALAHKYH (145 aa)) is the Globin domain. 2 residues coordinate heme b: His64 and His93.

Belongs to the globin family. In terms of assembly, heterotetramer of two delta chains and two alpha chains. In terms of tissue distribution, red blood cells.

The sequence is that of Hemoglobin subunit delta (HBD) from Ailuropoda melanoleuca (Giant panda).